We begin with the raw amino-acid sequence, 180 residues long: MRILGIDPGLRVTGFGVIDVSGHQLAYVASGVIRTPTADLATRLGTIFAGVSTLVREHAPDQAAIEKVFVNVNPQSTLLLGQARGAAICGLVSGGLPVAEYTALQLKQAIVGYGRATKAQMQEMVTRLLSLSGQPGSDAADALGIAICHAHGGNTLSTLGGLAPALAQKGLRLRRGRLVG.

Catalysis depends on residues Asp7, Glu66, and Asp138. Asp7, Glu66, and Asp138 together coordinate Mg(2+).

This sequence belongs to the RuvC family. As to quaternary structure, homodimer which binds Holliday junction (HJ) DNA. The HJ becomes 2-fold symmetrical on binding to RuvC with unstacked arms; it has a different conformation from HJ DNA in complex with RuvA. In the full resolvosome a probable DNA-RuvA(4)-RuvB(12)-RuvC(2) complex forms which resolves the HJ. It depends on Mg(2+) as a cofactor.

Its subcellular location is the cytoplasm. It catalyses the reaction Endonucleolytic cleavage at a junction such as a reciprocal single-stranded crossover between two homologous DNA duplexes (Holliday junction).. Its function is as follows. The RuvA-RuvB-RuvC complex processes Holliday junction (HJ) DNA during genetic recombination and DNA repair. Endonuclease that resolves HJ intermediates. Cleaves cruciform DNA by making single-stranded nicks across the HJ at symmetrical positions within the homologous arms, yielding a 5'-phosphate and a 3'-hydroxyl group; requires a central core of homology in the junction. The consensus cleavage sequence is 5'-(A/T)TT(C/G)-3'. Cleavage occurs on the 3'-side of the TT dinucleotide at the point of strand exchange. HJ branch migration catalyzed by RuvA-RuvB allows RuvC to scan DNA until it finds its consensus sequence, where it cleaves and resolves the cruciform DNA. The sequence is that of Crossover junction endodeoxyribonuclease RuvC from Burkholderia multivorans (strain ATCC 17616 / 249).